We begin with the raw amino-acid sequence, 137 residues long: Large ribosomal subunit protein uL16 (137 aa).

Belongs to the universal ribosomal protein uL16 family. Part of the 50S ribosomal subunit.

Functionally, binds 23S rRNA and is also seen to make contacts with the A and possibly P site tRNAs. The sequence is that of Large ribosomal subunit protein uL16 from Bartonella tribocorum (strain CIP 105476 / IBS 506).